The primary structure comprises 165 residues: UPF0303 protein Bcep1808_1522 (165 aa).

Belongs to the UPF0303 family.

The polypeptide is UPF0303 protein Bcep1808_1522 (Burkholderia vietnamiensis (strain G4 / LMG 22486) (Burkholderia cepacia (strain R1808))).